We begin with the raw amino-acid sequence, 232 residues long: Large ribosomal subunit protein uL1 (232 aa).

This sequence belongs to the universal ribosomal protein uL1 family. Part of the 50S ribosomal subunit.

Functionally, binds directly to 23S rRNA. The L1 stalk is quite mobile in the ribosome, and is involved in E site tRNA release. Protein L1 is also a translational repressor protein, it controls the translation of the L11 operon by binding to its mRNA. This chain is Large ribosomal subunit protein uL1, found in Rhizorhabdus wittichii (strain DSM 6014 / CCUG 31198 / JCM 15750 / NBRC 105917 / EY 4224 / RW1) (Sphingomonas wittichii).